The sequence spans 680 residues: E3 ubiquitin-protein ligase brl2 (680 aa).

Residues 44–72 (RSIQFDELESKIEGLQNLAEEKLKVLATL) adopt a coiled-coil conformation. Residues 206 to 233 (PQSTKVKEEATTSSKGKDEEKKVSTVEQ) form a disordered region. Residues 210-229 (KVKEEATTSSKGKDEEKKVS) show a composition bias toward basic and acidic residues. Coiled-coil stretches lie at residues 261–288 (LDSN…TNLK), 353–399 (MQND…ETMV), and 485–609 (DSLH…LKDT). The segment at 627-667 (CSVCNFERWKDRIISLCGHGFCYQCIQKRIETRQRRCPICG) adopts an RING-type zinc-finger fold.

The protein belongs to the BRE1 family. Component of the histone H2B ubiquitin ligase complex (HULC) composed of at least brl1, brl2, rhp6 and shf1.

It localises to the nucleus. It carries out the reaction S-ubiquitinyl-[E2 ubiquitin-conjugating enzyme]-L-cysteine + [acceptor protein]-L-lysine = [E2 ubiquitin-conjugating enzyme]-L-cysteine + N(6)-ubiquitinyl-[acceptor protein]-L-lysine.. Its pathway is protein modification; protein ubiquitination. Its function is as follows. E3 ubiquitin-protein ligase which belongs to the histone H2B ubiquitin ligase complex (HULC) which mediates monoubiquitination of histone H2B to form H2BK123ub1. H2BK123ub1 gives a specific tag for epigenetic transcriptional activation and is also a prerequisite for H3K4me and H3K79me formation. This is E3 ubiquitin-protein ligase brl2 (brl2) from Schizosaccharomyces pombe (strain 972 / ATCC 24843) (Fission yeast).